The primary structure comprises 130 residues: D-ribose pyranase (130 aa).

Catalysis depends on histidine 20, which acts as the Proton donor. Substrate-binding positions include aspartate 28, histidine 97, and 119-121 (YAN).

Belongs to the RbsD / FucU family. RbsD subfamily. As to quaternary structure, homodecamer.

It localises to the cytoplasm. It catalyses the reaction beta-D-ribopyranose = beta-D-ribofuranose. The protein operates within carbohydrate metabolism; D-ribose degradation; D-ribose 5-phosphate from beta-D-ribopyranose: step 1/2. Catalyzes the interconversion of beta-pyran and beta-furan forms of D-ribose. The protein is D-ribose pyranase of Thermoanaerobacter pseudethanolicus (strain ATCC 33223 / 39E) (Clostridium thermohydrosulfuricum).